Reading from the N-terminus, the 205-residue chain is Urease accessory protein UreE (205 aa).

Basic and acidic residues predominate over residues 171–192 (HHGHSHSHDHDHDHDHDHDHQH). A disordered region spans residues 171 to 205 (HHGHSHSHDHDHDHDHDHDHQHGPCCSHGHHHGHR).

It belongs to the UreE family.

Its subcellular location is the cytoplasm. In terms of biological role, involved in urease metallocenter assembly. Binds nickel. Probably functions as a nickel donor during metallocenter assembly. This is Urease accessory protein UreE from Burkholderia pseudomallei (strain K96243).